The primary structure comprises 932 residues: Protocadherin gamma-A3 (932 aa).

An N-terminal signal peptide occupies residues Met1–Gly29. 6 consecutive Cadherin domains span residues Gln30–Phe133, Pro134–Phe242, Thr243–Ile347, Thr348–Phe452, Pro453–Ile562, and Asp570–Ala682. Residues Gln30–Tyr692 lie on the Extracellular side of the membrane. Residues Asn265, Asn419, and Asn545 are each glycosylated (N-linked (GlcNAc...) asparagine). N-linked (GlcNAc...) asparagine glycosylation is present at Asn685. Residues Leu693 to Ala713 form a helical membrane-spanning segment. At Leu714–Lys932 the chain is on the cytoplasmic side. Disordered regions lie at residues Asn805–Asn841 and Ala902–Lys932. Residues Asn922–Lys932 are compositionally biased toward basic residues.

The protein resides in the cell membrane. In terms of biological role, potential calcium-dependent cell-adhesion protein. May be involved in the establishment and maintenance of specific neuronal connections in the brain. The chain is Protocadherin gamma-A3 (PCDHGA3) from Homo sapiens (Human).